We begin with the raw amino-acid sequence, 128 residues long: Large ribosomal subunit protein bL19 (128 aa).

This sequence belongs to the bacterial ribosomal protein bL19 family.

In terms of biological role, this protein is located at the 30S-50S ribosomal subunit interface and may play a role in the structure and function of the aminoacyl-tRNA binding site. This is Large ribosomal subunit protein bL19 from Herminiimonas arsenicoxydans.